The following is a 280-amino-acid chain: Protein lyl-1 (280 aa).

Residues 1-60 (MCPPQAQAEVGPTMTEKAEMVCAPSPAPAPPPKPASPGPPQVEEVGHRGGSSPPRLPPGV) form a disordered region. Pro residues predominate over residues 25-40 (SPAPAPPPKPASPGPP). The region spanning 150-202 (ARRVFTNSRERWRQQNVNGAFAELRKLLPTHPPDRKLSKNEVLRLAMKYIGFL) is the bHLH domain. Positions 214-280 (AAGPTPPGPR…EQTALSPEVR (67 aa)) are disordered. Basic and acidic residues predominate over residues 229–245 (RVPDDGARRGSGRRAEA). Residues 257–267 (PDGSPGGAARP) are compositionally biased toward low complexity. Phosphoserine is present on residues serine 260 and serine 276.

As to quaternary structure, efficient DNA binding requires dimerization with another bHLH protein.

The protein resides in the nucleus. This chain is Protein lyl-1 (LYL1), found in Homo sapiens (Human).